The following is a 475-amino-acid chain: Aspartyl/glutamyl-tRNA(Asn/Gln) amidotransferase subunit B (475 aa).

The protein belongs to the GatB/GatE family. GatB subfamily. Heterotrimer of A, B and C subunits.

It carries out the reaction L-glutamyl-tRNA(Gln) + L-glutamine + ATP + H2O = L-glutaminyl-tRNA(Gln) + L-glutamate + ADP + phosphate + H(+). It catalyses the reaction L-aspartyl-tRNA(Asn) + L-glutamine + ATP + H2O = L-asparaginyl-tRNA(Asn) + L-glutamate + ADP + phosphate + 2 H(+). Functionally, allows the formation of correctly charged Asn-tRNA(Asn) or Gln-tRNA(Gln) through the transamidation of misacylated Asp-tRNA(Asn) or Glu-tRNA(Gln) in organisms which lack either or both of asparaginyl-tRNA or glutaminyl-tRNA synthetases. The reaction takes place in the presence of glutamine and ATP through an activated phospho-Asp-tRNA(Asn) or phospho-Glu-tRNA(Gln). The protein is Aspartyl/glutamyl-tRNA(Asn/Gln) amidotransferase subunit B of Chromobacterium violaceum (strain ATCC 12472 / DSM 30191 / JCM 1249 / CCUG 213 / NBRC 12614 / NCIMB 9131 / NCTC 9757 / MK).